Reading from the N-terminus, the 299-residue chain is Light-independent protochlorophyllide reductase iron-sulfur ATP-binding protein (299 aa).

A disordered region spans residues 1–23 (MSPLDRTPPSLRGQDGEGSVQVH). Residues 43–48 (GIGKST) and Lys72 each bind ATP. Position 47 (Ser47) interacts with Mg(2+). Positions 128 and 162 each coordinate [4Fe-4S] cluster. ATP contacts are provided by residues 213–214 (NR) and 237–239 (PDL).

Belongs to the NifH/BchL/ChlL family. As to quaternary structure, homodimer. Protochlorophyllide reductase is composed of three subunits; BchL, BchN and BchB. [4Fe-4S] cluster is required as a cofactor.

The enzyme catalyses chlorophyllide a + oxidized 2[4Fe-4S]-[ferredoxin] + 2 ADP + 2 phosphate = protochlorophyllide a + reduced 2[4Fe-4S]-[ferredoxin] + 2 ATP + 2 H2O. Its pathway is porphyrin-containing compound metabolism; bacteriochlorophyll biosynthesis (light-independent). Functionally, component of the dark-operative protochlorophyllide reductase (DPOR) that uses Mg-ATP and reduced ferredoxin to reduce ring D of protochlorophyllide (Pchlide) to form chlorophyllide a (Chlide). This reaction is light-independent. The L component serves as a unique electron donor to the NB-component of the complex, and binds Mg-ATP. This is Light-independent protochlorophyllide reductase iron-sulfur ATP-binding protein from Roseobacter denitrificans (strain ATCC 33942 / OCh 114) (Erythrobacter sp. (strain OCh 114)).